A 340-amino-acid polypeptide reads, in one-letter code: ATP synthase subunit a (340 aa).

The signal sequence occupies residues M1 to A32. 6 consecutive transmembrane segments (helical) span residues H107 to S127, L172 to A192, N197 to L217, A236 to L256, I269 to V289, and I296 to L316.

The protein belongs to the ATPase A chain family. In terms of assembly, F-type ATPases have 2 components, CF(1) - the catalytic core - and CF(0) - the membrane proton channel. CF(1) has five subunits: alpha(3), beta(3), gamma(1), delta(1), epsilon(1). CF(0) has four main subunits: a, b, b' and c.

The protein resides in the cell inner membrane. Key component of the proton channel; it plays a direct role in the translocation of protons across the membrane. In Pelodictyon phaeoclathratiforme (strain DSM 5477 / BU-1), this protein is ATP synthase subunit a.